A 379-amino-acid chain; its full sequence is tRNA(Met) cytidine acetate ligase (379 aa).

Residues 7–20 (ITEY…HQYH), G100, N153, and R178 contribute to the ATP site.

It belongs to the TmcAL family.

It is found in the cytoplasm. It carries out the reaction cytidine(34) in elongator tRNA(Met) + acetate + ATP = N(4)-acetylcytidine(34) in elongator tRNA(Met) + AMP + diphosphate. Its function is as follows. Catalyzes the formation of N(4)-acetylcytidine (ac(4)C) at the wobble position of elongator tRNA(Met), using acetate and ATP as substrates. First activates an acetate ion to form acetyladenylate (Ac-AMP) and then transfers the acetyl group to tRNA to form ac(4)C34. This chain is tRNA(Met) cytidine acetate ligase, found in Staphylococcus aureus (strain Mu3 / ATCC 700698).